Reading from the N-terminus, the 114-residue chain is Eukaryotic translation initiation factor 6 (114 aa).

This sequence belongs to the eIF-6 family. In terms of assembly, monomer. Associates with the 60S ribosomal subunit.

The protein resides in the cytoplasm. Its subcellular location is the nucleus. It is found in the nucleolus. Binds to the 60S ribosomal subunit and prevents its association with the 40S ribosomal subunit to form the 80S initiation complex in the cytoplasm. May also be involved in ribosome biogenesis. The chain is Eukaryotic translation initiation factor 6 from Trypanosoma cruzi.